A 599-amino-acid polypeptide reads, in one-letter code: UvrABC system protein C (599 aa).

Residues 15–93 form the GIY-YIG domain; it reads DNPGVYQYYD…IKTLQPRYNI (79 aa). The UVR domain maps to 207-242; sequence KDSMKDFKKVMTNLAQNMHFEEAQKIKEKIEILENY.

This sequence belongs to the UvrC family. Interacts with UvrB in an incision complex.

It is found in the cytoplasm. Functionally, the UvrABC repair system catalyzes the recognition and processing of DNA lesions. UvrC both incises the 5' and 3' sides of the lesion. The N-terminal half is responsible for the 3' incision and the C-terminal half is responsible for the 5' incision. The protein is UvrABC system protein C of Flavobacterium psychrophilum (strain ATCC 49511 / DSM 21280 / CIP 103535 / JIP02/86).